Consider the following 200-residue polypeptide: NAD(P)H dehydrogenase (quinone) (200 aa).

The Flavodoxin-like domain occupies 4-190; sequence VLVLYYSTYG…DGARFQGRLV (187 aa). FMN contacts are provided by residues 10-15 and 78-80; these read STYGHL and TRF. Residue tyrosine 12 coordinates NAD(+). Tryptophan 98 is a binding site for substrate. Residues 113–119 and histidine 134 contribute to the FMN site; that span reads STATQHG.

It belongs to the WrbA family. Requires FMN as cofactor.

It carries out the reaction a quinone + NADH + H(+) = a quinol + NAD(+). The enzyme catalyses a quinone + NADPH + H(+) = a quinol + NADP(+). This is NAD(P)H dehydrogenase (quinone) from Acidovorax ebreus (strain TPSY) (Diaphorobacter sp. (strain TPSY)).